A 199-amino-acid polypeptide reads, in one-letter code: NAD(P)H dehydrogenase (quinone) (199 aa).

The Flavodoxin-like domain maps to Val4–Val190. FMN contacts are provided by residues Ser10–Met15 and Thr78–Tyr80. Tyr12 lines the NAD(+) pocket. Substrate is bound at residue Trp98. Residues Ser113–Gly119 and His134 each bind FMN. A disordered region spans residues Gly157 to Phe185. The segment covering Met163–Glu177 has biased composition (polar residues).

This sequence belongs to the WrbA family. Requires FMN as cofactor.

The enzyme catalyses a quinone + NADH + H(+) = a quinol + NAD(+). It carries out the reaction a quinone + NADPH + H(+) = a quinol + NADP(+). The sequence is that of NAD(P)H dehydrogenase (quinone) from Brucella anthropi (strain ATCC 49188 / DSM 6882 / CCUG 24695 / JCM 21032 / LMG 3331 / NBRC 15819 / NCTC 12168 / Alc 37) (Ochrobactrum anthropi).